The chain runs to 68 residues: MMSKLGVLLTICLLLFPLTAVPMDGDQPADLPALRTQDFEPERSPWFDPVRRCCSQDCSVCIPCCPPP.

A signal peptide spans 1–20 (MMSKLGVLLTICLLLFPLTA). A propeptide spanning residues 21–50 (VPMDGDQPADLPALRTQDFEPERSPWFDPV) is cleaved from the precursor. Cystine bridges form between cysteine 53–cysteine 65, cysteine 54–cysteine 61, and cysteine 58–cysteine 64. The residue at position 63 (proline 63) is a 4-hydroxyproline.

This sequence belongs to the conotoxin M superfamily. Expressed by the venom duct.

The protein localises to the secreted. The sequence is that of Conotoxin VnMMSK-01 from Conus ventricosus (Mediterranean cone).